Reading from the N-terminus, the 210-residue chain is Imidazoleglycerol-phosphate dehydratase (210 aa).

Belongs to the imidazoleglycerol-phosphate dehydratase family.

It localises to the cytoplasm. The catalysed reaction is D-erythro-1-(imidazol-4-yl)glycerol 3-phosphate = 3-(imidazol-4-yl)-2-oxopropyl phosphate + H2O. It participates in amino-acid biosynthesis; L-histidine biosynthesis; L-histidine from 5-phospho-alpha-D-ribose 1-diphosphate: step 6/9. The polypeptide is Imidazoleglycerol-phosphate dehydratase (Acidovorax ebreus (strain TPSY) (Diaphorobacter sp. (strain TPSY))).